The primary structure comprises 239 residues: Phosphoribosylaminoimidazole-succinocarboxamide synthase (239 aa).

The protein belongs to the SAICAR synthetase family.

The catalysed reaction is 5-amino-1-(5-phospho-D-ribosyl)imidazole-4-carboxylate + L-aspartate + ATP = (2S)-2-[5-amino-1-(5-phospho-beta-D-ribosyl)imidazole-4-carboxamido]succinate + ADP + phosphate + 2 H(+). It participates in purine metabolism; IMP biosynthesis via de novo pathway; 5-amino-1-(5-phospho-D-ribosyl)imidazole-4-carboxamide from 5-amino-1-(5-phospho-D-ribosyl)imidazole-4-carboxylate: step 1/2. The sequence is that of Phosphoribosylaminoimidazole-succinocarboxamide synthase from Acinetobacter baumannii (strain AB307-0294).